Here is a 66-residue protein sequence, read N- to C-terminus: Large ribosomal subunit protein bL28 (66 aa).

A disordered region spans residues 1–26 (MAKDAITGARTRFGNQRSHALNSSRR). The span at 13–25 (FGNQRSHALNSSR) shows a compositional bias: polar residues.

This sequence belongs to the bacterial ribosomal protein bL28 family.

The chain is Large ribosomal subunit protein bL28 from Leuconostoc citreum (strain KM20).